The primary structure comprises 784 residues: LPS-assembly protein LptD (784 aa).

Positions 1–24 (MKKRIPTLLATMIATALYSQQGLA) are cleaved as a signal peptide. 2 cysteine pairs are disulfide-bonded: Cys31-Cys724 and Cys173-Cys725.

It belongs to the LptD family. As to quaternary structure, component of the lipopolysaccharide transport and assembly complex. Interacts with LptE and LptA. In terms of processing, contains two intramolecular disulfide bonds.

It localises to the cell outer membrane. Its function is as follows. Together with LptE, is involved in the assembly of lipopolysaccharide (LPS) at the surface of the outer membrane. The sequence is that of LPS-assembly protein LptD from Shigella flexneri.